Consider the following 117-residue polypeptide: Large ribosomal subunit protein uL18 (117 aa).

This sequence belongs to the universal ribosomal protein uL18 family. Part of the 50S ribosomal subunit; part of the 5S rRNA/L5/L18/L25 subcomplex. Contacts the 5S and 23S rRNAs.

This is one of the proteins that bind and probably mediate the attachment of the 5S RNA into the large ribosomal subunit, where it forms part of the central protuberance. This Pectobacterium atrosepticum (strain SCRI 1043 / ATCC BAA-672) (Erwinia carotovora subsp. atroseptica) protein is Large ribosomal subunit protein uL18.